The following is a 122-amino-acid chain: Large ribosomal subunit protein uL14 (122 aa).

Belongs to the universal ribosomal protein uL14 family. In terms of assembly, part of the 50S ribosomal subunit. Forms a cluster with proteins L3 and L19. In the 70S ribosome, L14 and L19 interact and together make contacts with the 16S rRNA in bridges B5 and B8.

Functionally, binds to 23S rRNA. Forms part of two intersubunit bridges in the 70S ribosome. The polypeptide is Large ribosomal subunit protein uL14 (Ruminiclostridium cellulolyticum (strain ATCC 35319 / DSM 5812 / JCM 6584 / H10) (Clostridium cellulolyticum)).